We begin with the raw amino-acid sequence, 98 residues long: Defensin-A1 (98 aa).

The signal sequence occupies residues 1 to 19; that stretch reads MQTLSFLLALLFLVAQTPA. Residues 20 to 62 constitute a propeptide that is removed on maturation; it reads QPTGEGEKGGTIQEPEATEAQDTAAVLMAAGAADGDDSDTKQL. Intrachain disulfides connect Cys67–Cys94, Cys69–Cys83, and Cys73–Cys93. Positions 97-98 are excised as a propeptide; that stretch reads IK.

This sequence belongs to the alpha-defensin family. Highly expressed in intestine, and expressed at lower levels in lung and spleen.

It is found in the secreted. Has antimicrobial activity. The protein is Defensin-A1 of Ornithorhynchus anatinus (Duckbill platypus).